The chain runs to 492 residues: Steroid 21-hydroxylase (492 aa).

Arg-91 and Lys-120 together coordinate heme b. 17alpha-hydroxyprogesterone is bound at residue Arg-231. Arg-231 is a binding site for progesterone. Positions 363, 424, and 426 each coordinate heme b.

It belongs to the cytochrome P450 family. Heme b serves as cofactor.

The protein localises to the endoplasmic reticulum membrane. The protein resides in the microsome membrane. It carries out the reaction 17alpha-hydroxyprogesterone + reduced [NADPH--hemoprotein reductase] + O2 = 11-deoxycortisol + oxidized [NADPH--hemoprotein reductase] + H2O + H(+). It catalyses the reaction progesterone + reduced [NADPH--hemoprotein reductase] + O2 = 21-hydroxyprogesterone + oxidized [NADPH--hemoprotein reductase] + H2O + H(+). Specifically catalyzes the 21-hydroxylation of steroids. Required for the adrenal synthesis of mineralocorticoids and glucocorticoids. This is Steroid 21-hydroxylase (CYP21) from Lynx lynx (Eurasian lynx).